Here is a 495-residue protein sequence, read N- to C-terminus: Cysteine-rich secretory protein LCCL domain-containing 2 (495 aa).

The first 22 residues, 1–22 (MSCLLNNMVLMGLALLVCGVQA), serve as a signal peptide directing secretion. N-linked (GlcNAc...) asparagine glycosylation is present at Asn27. The 141-residue stretch at 60-200 (LMLHNKLRGQ…ENAVYLVCNY (141 aa)) folds into the SCP domain. LCCL domains lie at 282 to 377 (MTQV…SSSF) and 383 to 486 (TETA…QNGN). 4 disulfides stabilise this stretch: Cys288/Cys306, Cys310/Cys330, Cys389/Cys411, and Cys415/Cys438.

In terms of assembly, binds to heparin, dermatan sulfate and chondroitin sulfate. As to expression, present in kidney renal tubules (at protein level).

The protein resides in the secreted. Promotes matrix assembly. This Mus musculus (Mouse) protein is Cysteine-rich secretory protein LCCL domain-containing 2 (Crispld2).